We begin with the raw amino-acid sequence, 523 residues long: MHCSLNGDWSMQLNSTEISDLIKQRIESFEVVSEARNEGTIVSVSDGIIRIHGLADVMQGEMIELPGGRYALALNLERDSVGAVVMGPYADLKEGMKVTGTGRILEVPVGPELLGRVVNTLGEPIDGKGPIEAKLTSPVEVIAPGVIDRKSVDQPVQTGYKSVDSMIPIGRGQRELVIGDRQTGKTAMAIDAIINQKNSGIFSIYVAIGQKASTIANVVRKLEEHGALANTIVVVASASESAALQYLAPYAGCAMGEYFRDRGEDALIVYDDLSKQAVAYRQISLLLKRPPGREAFPGDVFYLHSRLLERAARVNEEYVERFTNGEVKGKTGSLTALPIIETQAGDVSAFVPTNVISITDGQIFLQTELFNAGVRPAVDPGISVSRVGGSAQTKIIKKLSGGIRTALAAYRELAAFAQFSSDLDEATKKQLDHGQKVTELMKQKQYAPMSVFDQALVIFAAERGYLDDVELNKVLDFEAALLSYARGQYAELAAEIDKSGAYNDEIEAQLKKLTDDFKATQTW.

Position 179–186 (179–186 (GDRQTGKT)) interacts with ATP.

The protein belongs to the ATPase alpha/beta chains family. F-type ATPases have 2 components, CF(1) - the catalytic core - and CF(0) - the membrane proton channel. CF(1) has five subunits: alpha(3), beta(3), gamma(1), delta(1), epsilon(1). CF(0) has three main subunits: a(1), b(2) and c(9-12). The alpha and beta chains form an alternating ring which encloses part of the gamma chain. CF(1) is attached to CF(0) by a central stalk formed by the gamma and epsilon chains, while a peripheral stalk is formed by the delta and b chains.

The protein resides in the cell inner membrane. The catalysed reaction is ATP + H2O + 4 H(+)(in) = ADP + phosphate + 5 H(+)(out). In terms of biological role, produces ATP from ADP in the presence of a proton gradient across the membrane. The alpha chain is a regulatory subunit. The sequence is that of ATP synthase subunit alpha from Vibrio parahaemolyticus serotype O3:K6 (strain RIMD 2210633).